The primary structure comprises 91 residues: MKIRAMVTVKGMVQGVNFRRYTQQTAMRFNVSGWVKNLPNGSVAGCFEGEENDVAALIDWCRQGPGSARVSGVEVERGEFTGEFDDFHIAY.

The region spanning 4–91 (RAMVTVKGMV…GEFDDFHIAY (88 aa)) is the Acylphosphatase-like domain. Catalysis depends on residues arginine 19 and asparagine 37.

It belongs to the acylphosphatase family.

The catalysed reaction is an acyl phosphate + H2O = a carboxylate + phosphate + H(+). In Geotalea uraniireducens (strain Rf4) (Geobacter uraniireducens), this protein is Acylphosphatase (acyP).